A 326-amino-acid chain; its full sequence is Transcription cofactor vestigial-like protein 3 (326 aa).

A disordered region spans residues 54–82; sequence SLEVTLPSKQEEEEEEEEDEEEEEKDQPA. Residue Lys-62 forms a Glycyl lysine isopeptide (Lys-Gly) (interchain with G-Cter in SUMO2) linkage. The segment covering 64–78 has biased composition (acidic residues); sequence EEEEEEEEDEEEEEK. Lys-129 participates in a covalent cross-link: Glycyl lysine isopeptide (Lys-Gly) (interchain with G-Cter in SUMO2). The segment at 184–208 is disordered; the sequence is TADPNSWPGHGLHQTGPAPPPTASE.

Belongs to the vestigial family.

The protein resides in the nucleus. In terms of biological role, may act as a specific coactivator for the mammalian TEFs. The polypeptide is Transcription cofactor vestigial-like protein 3 (Mus musculus (Mouse)).